The primary structure comprises 246 residues: Orotidine 5'-phosphate decarboxylase (246 aa).

Substrate contacts are provided by residues Asp-22, Lys-44, 71–80 (DLKYHDIPHT), Thr-130, Arg-191, Gln-201, Gly-221, and Arg-222. Lys-73 acts as the Proton donor in catalysis.

This sequence belongs to the OMP decarboxylase family. Type 1 subfamily. As to quaternary structure, homodimer.

It catalyses the reaction orotidine 5'-phosphate + H(+) = UMP + CO2. Its pathway is pyrimidine metabolism; UMP biosynthesis via de novo pathway; UMP from orotate: step 2/2. Functionally, catalyzes the decarboxylation of orotidine 5'-monophosphate (OMP) to uridine 5'-monophosphate (UMP). This Neisseria meningitidis serogroup A / serotype 4A (strain DSM 15465 / Z2491) protein is Orotidine 5'-phosphate decarboxylase.